Here is a 434-residue protein sequence, read N- to C-terminus: Alpha-enolase (434 aa).

A Mg(2+)-binding site is contributed by S40. H158 and E167 together coordinate substrate. Catalysis depends on E210, which acts as the Proton donor. Mg(2+)-binding residues include D245, E293, and D318. Residues E293, D318, 370-373, and K394 contribute to the substrate site; that span reads SHRS.

The protein belongs to the enolase family. In terms of assembly, homodimer. The cofactor is Mg(2+).

It localises to the cytoplasm. It catalyses the reaction (2R)-2-phosphoglycerate = phosphoenolpyruvate + H2O. Its pathway is carbohydrate degradation; glycolysis; pyruvate from D-glyceraldehyde 3-phosphate: step 4/5. The sequence is that of Alpha-enolase from Trachemys scripta elegans (Red-eared slider turtle).